The primary structure comprises 109 residues: Cell division suppressor protein YneA (109 aa).

The region spanning S39–I90 is the LysM domain.

The protein belongs to the YneA family.

Its subcellular location is the cytoplasm. Its function is as follows. Inhibits cell division during the SOS response. Affects a later stage of the cell division protein assembly, after the assembly of the Z ring, by probably suppressing recruitment of FtsL and/or DivIC to the division machinery. This is Cell division suppressor protein YneA from Listeria monocytogenes serotype 4b (strain F2365).